The following is a 472-amino-acid chain: Argininosuccinate lyase (472 aa).

The protein belongs to the lyase 1 family. Argininosuccinate lyase subfamily.

Its subcellular location is the cytoplasm. It catalyses the reaction 2-(N(omega)-L-arginino)succinate = fumarate + L-arginine. Its pathway is amino-acid biosynthesis; L-arginine biosynthesis; L-arginine from L-ornithine and carbamoyl phosphate: step 3/3. This Synechococcus sp. (strain CC9311) protein is Argininosuccinate lyase.